The primary structure comprises 155 residues: RNA pyrophosphohydrolase (155 aa).

Residues 6-148 enclose the Nudix hydrolase domain; that stretch reads GYRANVAIVL…KQEVYRKALT (143 aa). Positions 38–59 match the Nudix box motif; the sequence is GGVATGETPLQAMYRELHEEIG.

Belongs to the Nudix hydrolase family. RppH subfamily. Requires a divalent metal cation as cofactor.

Its function is as follows. Accelerates the degradation of transcripts by removing pyrophosphate from the 5'-end of triphosphorylated RNA, leading to a more labile monophosphorylated state that can stimulate subsequent ribonuclease cleavage. The protein is RNA pyrophosphohydrolase of Francisella tularensis subsp. tularensis (strain FSC 198).